The chain runs to 363 residues: 3,4-dihydroxy-2-butanone 4-phosphate synthase (363 aa).

Residues 1–202 (MSHISPIPEI…ITDLIEYRSR (202 aa)) are DHBP synthase. D-ribulose 5-phosphate contacts are provided by residues 28–29 (RE), D33, 141–145 (RAGHT), and E165. Residue E29 coordinates Mg(2+). H144 lines the Mg(2+) pocket. A GTP cyclohydrolase II-like region spans residues 205–363 (SLLEDMGNAP…EVVGFEEAEK (159 aa)).

In the N-terminal section; belongs to the DHBP synthase family. It in the C-terminal section; belongs to the GTP cyclohydrolase II family. Requires Mg(2+) as cofactor. It depends on Mn(2+) as a cofactor.

The catalysed reaction is D-ribulose 5-phosphate = (2S)-2-hydroxy-3-oxobutyl phosphate + formate + H(+). Its pathway is cofactor biosynthesis; riboflavin biosynthesis; 2-hydroxy-3-oxobutyl phosphate from D-ribulose 5-phosphate: step 1/1. In terms of biological role, catalyzes the conversion of D-ribulose 5-phosphate to formate and 3,4-dihydroxy-2-butanone 4-phosphate. In Neisseria meningitidis serogroup A / serotype 4A (strain DSM 15465 / Z2491), this protein is 3,4-dihydroxy-2-butanone 4-phosphate synthase (ribB).